We begin with the raw amino-acid sequence, 396 residues long: Tryptophan synthase beta chain (396 aa).

Position 86 is an N6-(pyridoxal phosphate)lysine (Lys-86).

Belongs to the TrpB family. Tetramer of two alpha and two beta chains. The cofactor is pyridoxal 5'-phosphate.

The catalysed reaction is (1S,2R)-1-C-(indol-3-yl)glycerol 3-phosphate + L-serine = D-glyceraldehyde 3-phosphate + L-tryptophan + H2O. The protein operates within amino-acid biosynthesis; L-tryptophan biosynthesis; L-tryptophan from chorismate: step 5/5. The beta subunit is responsible for the synthesis of L-tryptophan from indole and L-serine. This Photobacterium profundum (strain SS9) protein is Tryptophan synthase beta chain.